A 359-amino-acid polypeptide reads, in one-letter code: Aminomethyltransferase (359 aa).

Belongs to the GcvT family. In terms of assembly, the glycine cleavage system is composed of four proteins: P, T, L and H.

The enzyme catalyses N(6)-[(R)-S(8)-aminomethyldihydrolipoyl]-L-lysyl-[protein] + (6S)-5,6,7,8-tetrahydrofolate = N(6)-[(R)-dihydrolipoyl]-L-lysyl-[protein] + (6R)-5,10-methylene-5,6,7,8-tetrahydrofolate + NH4(+). Functionally, the glycine cleavage system catalyzes the degradation of glycine. This chain is Aminomethyltransferase, found in Pseudoalteromonas atlantica (strain T6c / ATCC BAA-1087).